Consider the following 220-residue polypeptide: Ribosomal RNA small subunit methyltransferase G (220 aa).

S-adenosyl-L-methionine is bound by residues Gly-78, Phe-83, 129-130 (GE), and Arg-146.

The protein belongs to the methyltransferase superfamily. RNA methyltransferase RsmG family.

The protein localises to the cytoplasm. It carries out the reaction guanosine(527) in 16S rRNA + S-adenosyl-L-methionine = N(7)-methylguanosine(527) in 16S rRNA + S-adenosyl-L-homocysteine. Its function is as follows. Specifically methylates the N7 position of guanine in position 527 of 16S rRNA. The protein is Ribosomal RNA small subunit methyltransferase G of Geobacter metallireducens (strain ATCC 53774 / DSM 7210 / GS-15).